We begin with the raw amino-acid sequence, 297 residues long: N-acetylmuramic acid 6-phosphate etherase (297 aa).

An SIS domain is found at 55–218 (ATDALKSGGR…STGAMVKFGK (164 aa)). E83 (proton donor) is an active-site residue. Residue E114 is part of the active site.

Belongs to the GCKR-like family. MurNAc-6-P etherase subfamily. In terms of assembly, homodimer.

The catalysed reaction is N-acetyl-D-muramate 6-phosphate + H2O = N-acetyl-D-glucosamine 6-phosphate + (R)-lactate. Its pathway is amino-sugar metabolism; 1,6-anhydro-N-acetylmuramate degradation. It participates in amino-sugar metabolism; N-acetylmuramate degradation. It functions in the pathway cell wall biogenesis; peptidoglycan recycling. In terms of biological role, specifically catalyzes the cleavage of the D-lactyl ether substituent of MurNAc 6-phosphate, producing GlcNAc 6-phosphate and D-lactate. Together with AnmK, is also required for the utilization of anhydro-N-acetylmuramic acid (anhMurNAc) either imported from the medium or derived from its own cell wall murein, and thus plays a role in cell wall recycling. This is N-acetylmuramic acid 6-phosphate etherase from Enterobacter sp. (strain 638).